Reading from the N-terminus, the 1247-residue chain is DNA-directed RNA polymerase subunit beta (1247 aa).

It belongs to the RNA polymerase beta chain family. In plastids the minimal PEP RNA polymerase catalytic core is composed of four subunits: alpha, beta, beta', and beta''. When a (nuclear-encoded) sigma factor is associated with the core the holoenzyme is formed, which can initiate transcription.

It is found in the plastid. It carries out the reaction RNA(n) + a ribonucleoside 5'-triphosphate = RNA(n+1) + diphosphate. Its function is as follows. DNA-dependent RNA polymerase catalyzes the transcription of DNA into RNA using the four ribonucleoside triphosphates as substrates. This chain is DNA-directed RNA polymerase subunit beta (rpoB), found in Helicosporidium sp. subsp. Simulium jonesii (Green alga).